A 410-amino-acid polypeptide reads, in one-letter code: Arginine deiminase (410 aa).

C400 serves as the catalytic Amidino-cysteine intermediate.

Belongs to the arginine deiminase family.

It localises to the cytoplasm. It catalyses the reaction L-arginine + H2O = L-citrulline + NH4(+). Its pathway is amino-acid degradation; L-arginine degradation via ADI pathway; carbamoyl phosphate from L-arginine: step 1/2. The polypeptide is Arginine deiminase (arcA) (Lactococcus lactis subsp. lactis (strain IL1403) (Streptococcus lactis)).